The sequence spans 152 residues: Acidic phospholipase A2 1 (152 aa).

The first 19 residues, 1-19 (MNPAYFLVLAAVCVSLLGA), serve as a signal peptide directing secretion. Residues 20 to 27 (ANIPPQPL) constitute a propeptide that is removed on maturation. 7 cysteine pairs are disulfide-bonded: C38–C104, C54–C151, C56–C72, C71–C132, C78–C125, C88–C118, and C111–C123. Positions 55, 57, and 59 each coordinate Ca(2+). The active site involves H75. D76 serves as a coordination point for Ca(2+). Residue D126 is part of the active site.

It belongs to the phospholipase A2 family. Group I subfamily. D49 sub-subfamily. Requires Ca(2+) as cofactor. Expressed by the venom gland.

It is found in the secreted. It carries out the reaction a 1,2-diacyl-sn-glycero-3-phosphocholine + H2O = a 1-acyl-sn-glycero-3-phosphocholine + a fatty acid + H(+). Its function is as follows. PLA2 catalyzes the calcium-dependent hydrolysis of the 2-acyl groups in 3-sn-phosphoglycerides. The protein is Acidic phospholipase A2 1 of Bungarus candidus (Malayan krait).